The following is a 140-amino-acid chain: Lysozyme E (140 aa).

A signal peptide spans 1-18 (MKAFIVLVALAMAAPALG). A C-type lysozyme domain is found at 19–140 (RTLDRCSLAR…GWLPSIDGCF (122 aa)). 4 disulfide bridges follow: cysteine 24/cysteine 139, cysteine 45/cysteine 129, cysteine 80/cysteine 96, and cysteine 92/cysteine 110. Active-site residues include glutamate 50 and aspartate 68.

Belongs to the glycosyl hydrolase 22 family. As to expression, found in the midgut.

The enzyme catalyses Hydrolysis of (1-&gt;4)-beta-linkages between N-acetylmuramic acid and N-acetyl-D-glucosamine residues in a peptidoglycan and between N-acetyl-D-glucosamine residues in chitodextrins.. Its function is as follows. Unlikely to play an active role in the humoral immune defense. May have a function in the digestion of bacteria in the food. The polypeptide is Lysozyme E (LysE) (Drosophila melanogaster (Fruit fly)).